We begin with the raw amino-acid sequence, 62 residues long: UPF0434 protein RHECIAT_CH0004260 (62 aa).

It belongs to the UPF0434 family.

The chain is UPF0434 protein RHECIAT_CH0004260 from Rhizobium etli (strain CIAT 652).